Consider the following 511-residue polypeptide: 2,3-bisphosphoglycerate-independent phosphoglycerate mutase (511 aa).

2 residues coordinate Mn(2+): Asp14 and Ser64. Ser64 serves as the catalytic Phosphoserine intermediate. Substrate contacts are provided by residues His125, 155 to 156 (RD), Arg187, Arg193, 259 to 262 (RADR), and Lys333. Asp400, His404, Asp441, His442, and His460 together coordinate Mn(2+).

Belongs to the BPG-independent phosphoglycerate mutase family. Monomer. The cofactor is Mn(2+).

The enzyme catalyses (2R)-2-phosphoglycerate = (2R)-3-phosphoglycerate. It participates in carbohydrate degradation; glycolysis; pyruvate from D-glyceraldehyde 3-phosphate: step 3/5. Its function is as follows. Catalyzes the interconversion of 2-phosphoglycerate and 3-phosphoglycerate. The sequence is that of 2,3-bisphosphoglycerate-independent phosphoglycerate mutase from Pseudoalteromonas atlantica (strain T6c / ATCC BAA-1087).